The following is a 198-amino-acid chain: Large ribosomal subunit protein bL9 (198 aa).

This sequence belongs to the bacterial ribosomal protein bL9 family.

Its function is as follows. Binds to the 23S rRNA. In Bartonella tribocorum (strain CIP 105476 / IBS 506), this protein is Large ribosomal subunit protein bL9.